A 453-amino-acid polypeptide reads, in one-letter code: Adenosylmethionine-8-amino-7-oxononanoate aminotransferase (453 aa).

Position 118 to 119 (118 to 119 (GA)) interacts with pyridoxal 5'-phosphate. Tyr151 lines the substrate pocket. Pyridoxal 5'-phosphate is bound at residue Asp257. The substrate site is built by Lys286, Gly321, and Arg416. Lys286 carries the post-translational modification N6-(pyridoxal phosphate)lysine.

It belongs to the class-III pyridoxal-phosphate-dependent aminotransferase family. BioA subfamily. Homodimer. The cofactor is pyridoxal 5'-phosphate.

The protein resides in the cytoplasm. The catalysed reaction is (8S)-8-amino-7-oxononanoate + S-adenosyl-L-methionine = S-adenosyl-4-methylsulfanyl-2-oxobutanoate + (7R,8S)-7,8-diammoniononanoate. It participates in cofactor biosynthesis; biotin biosynthesis; 7,8-diaminononanoate from 8-amino-7-oxononanoate (SAM route): step 1/1. In terms of biological role, catalyzes the transfer of the alpha-amino group from S-adenosyl-L-methionine (SAM) to 7-keto-8-aminopelargonic acid (KAPA) to form 7,8-diaminopelargonic acid (DAPA). It is the only aminotransferase known to utilize SAM as an amino donor. The chain is Adenosylmethionine-8-amino-7-oxononanoate aminotransferase from Aquifex aeolicus (strain VF5).